We begin with the raw amino-acid sequence, 227 residues long: Ferritin light chain (227 aa).

Residues 1–19 form the signal peptide; it reads MKFFVALALFACLGSLALA. Residues cysteine 25 and cysteine 44 are joined by a disulfide bond. Residues 48-208 form the Ferritin-like diiron domain; that stretch reads FAGIDHIEPE…GYANDLAKLM (161 aa).

It belongs to the ferritin family. In terms of assembly, oligomer of 12 light (L) chains and 12 heavy (H) chains; L and H chains are disulfide-linked. The functional molecule forms a roughly spherical shell with a diameter of 12 nm and contains a central cavity into which the insoluble ferric iron core is deposited. Expressed in hemolymph, gut, ovaries and to a lesser extent in testes (at protein level). Expressed in the head (at protein level).

Its subcellular location is the golgi apparatus. It localises to the secreted. Stores iron in a soluble, non-toxic, readily available form. Important for iron homeostasis. Iron is taken up in the ferrous form and deposited as ferric hydroxides after oxidation. Ferritin is composed of a heavy (H) chain which is responsible for the oxidation and uptake of ferrous iron, and a light (L) chain which facilitates the nucleation of the ferrihydrite iron core. Required for dietary iron absorption in the midgut. Involved in tissue iron detoxification by exporting excess iron. Plays a role in the maintenance of circadian rhythms. Required for embryo and larval development. The sequence is that of Ferritin light chain from Drosophila melanogaster (Fruit fly).